Reading from the N-terminus, the 134-residue chain is Large-conductance mechanosensitive channel (134 aa).

2 helical membrane passes run 15 to 35 and 80 to 100; these read IDLA…QSVV and GNFI…FLAV.

The protein belongs to the MscL family. As to quaternary structure, homopentamer.

The protein resides in the cell inner membrane. Channel that opens in response to stretch forces in the membrane lipid bilayer. May participate in the regulation of osmotic pressure changes within the cell. This Methylocella silvestris (strain DSM 15510 / CIP 108128 / LMG 27833 / NCIMB 13906 / BL2) protein is Large-conductance mechanosensitive channel.